Here is a 943-residue protein sequence, read N- to C-terminus: Isoleucine--tRNA ligase (943 aa).

The 'HIGH' region motif lies at 59–69 (PYANGQIHLGH). E577 is an L-isoleucyl-5'-AMP binding site. The short motif at 618 to 622 (KMSKS) is the 'KMSKS' region element. K621 serves as a coordination point for ATP. Zn(2+)-binding residues include C906, C909, C926, and C929.

This sequence belongs to the class-I aminoacyl-tRNA synthetase family. IleS type 1 subfamily. In terms of assembly, monomer. The cofactor is Zn(2+).

The protein localises to the cytoplasm. The enzyme catalyses tRNA(Ile) + L-isoleucine + ATP = L-isoleucyl-tRNA(Ile) + AMP + diphosphate. Functionally, catalyzes the attachment of isoleucine to tRNA(Ile). As IleRS can inadvertently accommodate and process structurally similar amino acids such as valine, to avoid such errors it has two additional distinct tRNA(Ile)-dependent editing activities. One activity is designated as 'pretransfer' editing and involves the hydrolysis of activated Val-AMP. The other activity is designated 'posttransfer' editing and involves deacylation of mischarged Val-tRNA(Ile). The protein is Isoleucine--tRNA ligase of Xanthomonas axonopodis pv. citri (strain 306).